Consider the following 134-residue polypeptide: uncharacterized protein (134 aa).

The helical transmembrane segment at 110 to 130 threads the bilayer; sequence SLGVLTDILFLVLYSLLIHLS.

It is found in the membrane. This is an uncharacterized protein from Saccharomyces cerevisiae (strain ATCC 204508 / S288c) (Baker's yeast).